The following is a 158-amino-acid chain: Small ribosomal subunit protein bS6 (158 aa).

Positions Arg-92–Ala-149 are enriched in basic and acidic residues. Residues Arg-92–Glu-158 form a disordered region.

It belongs to the bacterial ribosomal protein bS6 family.

Its function is as follows. Binds together with bS18 to 16S ribosomal RNA. The sequence is that of Small ribosomal subunit protein bS6 from Rhodopseudomonas palustris (strain ATCC BAA-98 / CGA009).